The sequence spans 355 residues: MKQKILFIDRDGTLIHEPSNDCQVDAINKLEFKKYIISSLCQLMNFGYKFVMVTNQDGLGSKSFPRENFNIPHFFMLNIFRSEGIIFEDVLICPHFLDDNCDCRKPQTKLLKPWLKKNKIDKQRSYVIGDRETDMELAKNINLTGIQYKEKEFNWIDITKEIIKRNRYREVIRETKETYIHIKLWLDLEHHSCIQTGINFFDHMLEQLSIHSGISMYILAKGDLQIDDHHTIEDTGIVLGEALSQALNNKNGLSRYGFVLPMDESQAKCIIDLSNRPYLSFNAHFKHKMVGDMNTDMVEHFFYSLCCSMKITLHIDVKGKNDHHCIESLFKAFGRALRKAVKIEGNTLPTSKGIL.

The interval 1–166 (MKQKILFIDR…DITKEIIKRN (166 aa)) is histidinol-phosphatase. Asp9 functions as the Nucleophile in the catalytic mechanism. Mg(2+) contacts are provided by Asp9 and Asp11. The active-site Proton donor is Asp11. Zn(2+)-binding residues include Cys93, His95, Cys101, and Cys103. Position 130 (Asp130) interacts with Mg(2+). Positions 167–355 (RYREVIRETK…NTLPTSKGIL (189 aa)) are imidazoleglycerol-phosphate dehydratase.

The protein in the N-terminal section; belongs to the histidinol-phosphatase family. In the C-terminal section; belongs to the imidazoleglycerol-phosphate dehydratase family. The cofactor is Mg(2+). Zn(2+) is required as a cofactor.

Its subcellular location is the cytoplasm. The catalysed reaction is D-erythro-1-(imidazol-4-yl)glycerol 3-phosphate = 3-(imidazol-4-yl)-2-oxopropyl phosphate + H2O. It carries out the reaction L-histidinol phosphate + H2O = L-histidinol + phosphate. It participates in amino-acid biosynthesis; L-histidine biosynthesis; L-histidine from 5-phospho-alpha-D-ribose 1-diphosphate: step 6/9. The protein operates within amino-acid biosynthesis; L-histidine biosynthesis; L-histidine from 5-phospho-alpha-D-ribose 1-diphosphate: step 8/9. This Buchnera aphidicola subsp. Schizaphis graminum (strain Sg) protein is Histidine biosynthesis bifunctional protein HisB.